The sequence spans 407 residues: Peptidase T (407 aa).

A Zn(2+)-binding site is contributed by histidine 82. Residue aspartate 84 is part of the active site. Residue aspartate 143 participates in Zn(2+) binding. Glutamate 177 (proton acceptor) is an active-site residue. 3 residues coordinate Zn(2+): glutamate 178, aspartate 200, and histidine 382.

It belongs to the peptidase M20B family. It depends on Zn(2+) as a cofactor.

The protein localises to the cytoplasm. It carries out the reaction Release of the N-terminal residue from a tripeptide.. In terms of biological role, cleaves the N-terminal amino acid of tripeptides. The sequence is that of Peptidase T from Streptococcus pyogenes serotype M49 (strain NZ131).